A 110-amino-acid polypeptide reads, in one-letter code: DNA-binding protein PAE3044 (110 aa).

The protein belongs to the PDCD5 family.

This Pyrobaculum aerophilum (strain ATCC 51768 / DSM 7523 / JCM 9630 / CIP 104966 / NBRC 100827 / IM2) protein is DNA-binding protein PAE3044.